The chain runs to 378 residues: Beta-1,3-galactosyltransferase 4 (378 aa).

Residues 1 to 8 (MQLRLFRR) are Cytoplasmic-facing. A helical; Signal-anchor for type II membrane protein transmembrane segment spans residues 9-19 (LLLAALLLVIV). Over 20 to 378 (WTLFGPSGLG…RCRAIAWLQS (359 aa)) the chain is Lumenal. The N-linked (GlcNAc...) asparagine glycan is linked to Asn149.

Belongs to the glycosyltransferase 31 family. As to expression, highly expressed in heart, skeletal muscle and pancreas and, to a lesser extent, in brain, placenta, kidney, liver and lung.

It localises to the golgi apparatus membrane. The catalysed reaction is a ganglioside GM2 (d18:1(4E)) + UDP-alpha-D-galactose = a ganglioside GM1 (d18:1(4E)) + UDP + H(+). It carries out the reaction a ganglioside GM2 + UDP-alpha-D-galactose = a ganglioside GM1 + UDP + H(+). The enzyme catalyses a ganglioside GD2 (d18:1(4E)) + UDP-alpha-D-galactose = a ganglioside GD1b (d18:1(4E)) + UDP + H(+). It catalyses the reaction a ganglioside GA2 (d18:1(4E)) + UDP-alpha-D-galactose = a ganglioside GA1 (d18:1(4E)) + UDP + H(+). It functions in the pathway protein modification; protein glycosylation. In terms of biological role, involved in GM1/GD1B/GA1 ganglioside biosynthesis. The chain is Beta-1,3-galactosyltransferase 4 from Homo sapiens (Human).